Here is a 61-residue protein sequence, read N- to C-terminus: Small ribosomal subunit protein uS14B (61 aa).

Residues Cys24, Cys27, Cys40, and Cys43 each contribute to the Zn(2+) site.

This sequence belongs to the universal ribosomal protein uS14 family. Zinc-binding uS14 subfamily. As to quaternary structure, part of the 30S ribosomal subunit. Contacts proteins S3 and S10. Zn(2+) serves as cofactor.

Functionally, binds 16S rRNA, required for the assembly of 30S particles and may also be responsible for determining the conformation of the 16S rRNA at the A site. The protein is Small ribosomal subunit protein uS14B of Levilactobacillus brevis (strain ATCC 367 / BCRC 12310 / CIP 105137 / JCM 1170 / LMG 11437 / NCIMB 947 / NCTC 947) (Lactobacillus brevis).